A 211-amino-acid chain; its full sequence is Probable GTP-binding protein EngB (211 aa).

The EngB-type G domain maps to 21 to 197; that stretch reads TAPEFAFLGR…WGEIHRVAAE (177 aa). Residues 29–36, 55–59, 80–83, 147–150, and 176–178 contribute to the GTP site; these read GRSNVGKS, GRTRA, DLPG, TKAD, and CSA. The Mg(2+) site is built by serine 36 and threonine 57.

Belongs to the TRAFAC class TrmE-Era-EngA-EngB-Septin-like GTPase superfamily. EngB GTPase family. The cofactor is Mg(2+).

Necessary for normal cell division and for the maintenance of normal septation. The sequence is that of Probable GTP-binding protein EngB from Acidobacterium capsulatum (strain ATCC 51196 / DSM 11244 / BCRC 80197 / JCM 7670 / NBRC 15755 / NCIMB 13165 / 161).